A 1100-amino-acid polypeptide reads, in one-letter code: Isoleucine--tRNA ligase (1100 aa).

A 'HIGH' region motif is present at residues 48–58 (PFATGLPHFGH). The 'KMSKS' region motif lies at 626–630 (KMSKS). Position 629 (lysine 629) interacts with ATP.

Belongs to the class-I aminoacyl-tRNA synthetase family. IleS type 2 subfamily. Monomer. Requires Zn(2+) as cofactor.

It is found in the cytoplasm. The catalysed reaction is tRNA(Ile) + L-isoleucine + ATP = L-isoleucyl-tRNA(Ile) + AMP + diphosphate. In terms of biological role, catalyzes the attachment of isoleucine to tRNA(Ile). As IleRS can inadvertently accommodate and process structurally similar amino acids such as valine, to avoid such errors it has two additional distinct tRNA(Ile)-dependent editing activities. One activity is designated as 'pretransfer' editing and involves the hydrolysis of activated Val-AMP. The other activity is designated 'posttransfer' editing and involves deacylation of mischarged Val-tRNA(Ile). The protein is Isoleucine--tRNA ligase of Treponema denticola (strain ATCC 35405 / DSM 14222 / CIP 103919 / JCM 8153 / KCTC 15104).